The primary structure comprises 159 residues: E3 ubiquitin ligase complex SCF subunit sconC (159 aa).

Residues 101–159 (ILAANYLDIKALLDVGCKTVANMIKGKSPEEIRKTFNIQNDFTPEEEDQIRRENEWAEE) are interaction with the F-box domain of F-box proteins.

This sequence belongs to the SKP1 family. In terms of assembly, component of the SCF (SKP1-CUL1-F-box protein) E3 ubiquitin ligase complexes.

Its pathway is protein modification; protein ubiquitination. Functionally, essential component of the SCF (SKP1-CUL1-F-box protein) E3 ubiquitin ligase complexes, which mediate the ubiquitination and subsequent proteasomal degradation of target proteins. Controls sulfur metabolite repression, probably by mediating the inactivation or degradation of the metR transcription factor. This Aspergillus clavatus (strain ATCC 1007 / CBS 513.65 / DSM 816 / NCTC 3887 / NRRL 1 / QM 1276 / 107) protein is E3 ubiquitin ligase complex SCF subunit sconC (sconC).